The chain runs to 329 residues: Ribosome biogenesis regulatory protein homolog (329 aa).

Disordered regions lie at residues 227 to 248 and 262 to 329; these read KANI…VSAE and KKAK…NKRK. Residues 278–295 show a composition bias toward basic and acidic residues; it reads LREKKEKQEKKGAKEATR. Over residues 320 to 329 the composition is skewed to basic residues; it reads AKKKGANKRK.

Belongs to the RRS1 family.

Its subcellular location is the nucleus. The protein resides in the nucleolus. Functionally, involved in ribosomal large subunit assembly. The polypeptide is Ribosome biogenesis regulatory protein homolog (Caenorhabditis briggsae).